A 131-amino-acid polypeptide reads, in one-letter code: Histone H2B.1 (131 aa).

The span at 1-20 (MAPPKAEKKPASKAPAEKKP) shows a compositional bias: basic and acidic residues. Positions 1–39 (MAPPKAEKKPASKAPAEKKPAAKKTASATDSKKRTKTRK) are disordered. Lysine 8 and lysine 9 each carry N6-acetyllysine; alternate. Glycyl lysine isopeptide (Lys-Gly) (interchain with G-Cter in SUMO); alternate cross-links involve residues lysine 8 and lysine 9. The residue at position 12 (serine 12) is a Phosphoserine. N6-acetyllysine is present on lysine 13. Lysine 18 bears the N6-acetyllysine; alternate mark. Lysine 18 is covalently cross-linked (Glycyl lysine isopeptide (Lys-Gly) (interchain with G-Cter in SUMO); alternate). Lysine 19 is covalently cross-linked (Glycyl lysine isopeptide (Lys-Gly) (interchain with G-Cter in SUMO)). A Glycyl lysine isopeptide (Lys-Gly) (interchain with G-Cter in ubiquitin) cross-link involves residue lysine 125.

The protein belongs to the histone H2B family. As to quaternary structure, the nucleosome is a histone octamer containing two molecules each of H2A, H2B, H3 and H4 assembled in one H3-H4 heterotetramer and two H2A-H2B heterodimers. The octamer wraps approximately 147 bp of DNA. In terms of processing, monoubiquitinated to form H2BK123ub1. H2BK123ub1 gives a specific tag for epigenetic transcriptional activation and is also prerequisite for H3K4me and H3K79me formation. H2BK123ub1 also modulates the formation of double-strand breaks during meiosis and is a prerequisite for DNA-damage checkpoint activation. Post-translationally, phosphorylated by STE20 to form H2BS10ph during progression through meiotic prophase. May be correlated with chromosome condensation. Acetylated by GCN5 to form H2BK11ac and H2BK16ac. H2BK16ac can also be formed by ESA1. Acetylation of N-terminal lysines and particularly formation of H2BK11acK16ac has a positive effect on transcription. In terms of processing, sumoylation to form H2BK6su or H2BK7su, and probably also H2BK16su or H2BK17su, occurs preferentially near the telomeres and represses gene transcription.

The protein localises to the nucleus. The protein resides in the chromosome. Core component of nucleosome. Nucleosomes wrap and compact DNA into chromatin, limiting DNA accessibility to the cellular machineries which require DNA as a template. Histones thereby play a central role in transcription regulation, DNA repair, DNA replication and chromosomal stability. DNA accessibility is regulated via a complex set of post-translational modifications of histones, also called histone code, and nucleosome remodeling. The protein is Histone H2B.1 (HTB1) of Scheffersomyces stipitis (strain ATCC 58785 / CBS 6054 / NBRC 10063 / NRRL Y-11545) (Yeast).